We begin with the raw amino-acid sequence, 166 residues long: NAD(P)H-quinone oxidoreductase subunit I, chloroplastic (166 aa).

2 4Fe-4S ferredoxin-type domains span residues 55–84 (GRIHFEFDKCIACEVCVRVCPIDLPVVDWK) and 95–124 (LNYSIDFGICIFCGNCVEYCPTNCLSMTEE). Residues Cys-64, Cys-67, Cys-70, Cys-74, Cys-104, Cys-107, Cys-110, and Cys-114 each contribute to the [4Fe-4S] cluster site.

It belongs to the complex I 23 kDa subunit family. NDH is composed of at least 16 different subunits, 5 of which are encoded in the nucleus. [4Fe-4S] cluster is required as a cofactor.

Its subcellular location is the plastid. It is found in the chloroplast thylakoid membrane. The catalysed reaction is a plastoquinone + NADH + (n+1) H(+)(in) = a plastoquinol + NAD(+) + n H(+)(out). The enzyme catalyses a plastoquinone + NADPH + (n+1) H(+)(in) = a plastoquinol + NADP(+) + n H(+)(out). Functionally, NDH shuttles electrons from NAD(P)H:plastoquinone, via FMN and iron-sulfur (Fe-S) centers, to quinones in the photosynthetic chain and possibly in a chloroplast respiratory chain. The immediate electron acceptor for the enzyme in this species is believed to be plastoquinone. Couples the redox reaction to proton translocation, and thus conserves the redox energy in a proton gradient. The sequence is that of NAD(P)H-quinone oxidoreductase subunit I, chloroplastic from Parthenium hysterophorus (Santa Maria feverfew).